We begin with the raw amino-acid sequence, 875 residues long: MEPGPAHRRRRPAVACSECRRRKIRCDRGFPCGPCRKSLPALSCIYHSQPRAYAASAPPRPHTAQHQPRPKVNNTHSVDLTKFNLPSFESDAFHGLDQFGIDWQPSWEHQITPPTGHLADAGADYFQSPTFSVIDDHEKKESTNHSRARQGYPGSTETINPGSVSHSAGVNPDSGDDRWYQILARIGKVEYLIRDITRHQSSDEAQLVPILRDLYEAEPDECLRLPPLSGIVLKLENQARLQKQQDDKQSLARLSPLLDASSKIHQLLPPRQACKKLVSAYFETFGSVLCILDTAVFTSEFERFWEAIDASRVPSTDHEEAFAHKLLVVIALGSVTCPSSPGAASSEAERARQTSRRNHAIMCVQHTRQWLAQKTARGIRADLDVAQILCLLALARQTQLHTDPWPRRPSMDGTVILTGDHDLARLGMQMGLHREPRTGSMAKPAKEAETELRRRLWATMLELSLHQYLDAELPPPLGADSYDCATPSSNGVEEEPRSYFVPDSLRVPASTVLAALSRTQRLRLRVLEHLHASGASKDIQESQRLAIELSQAFNSEVNSLLSPASTQPTSFQLWLLNVFVRPFILALGVPLSGESRNRFADYYLRRLRLENAVAMLRPGPHEDGPRSIQSQISSHAGQTGSRTKTAATAYPFLPTPGTAEPCNTSSEQHFGTHKAACTSLYIGGPSYYAVVHRQVVASLCADVVAEIEDDMFPNLDAAMLHRIVAILEDAVNEYRDQVHASAGAHACHEFILFAAAHSLALASLNRSSAREVKESVMSSVWMALHHCCQAMGEPAEAMLETEWGTEAVQQTATESQSVNRSVSDADKGYEIDAQLQGVKYMLQQQSDAASTADGEIADMWAFDDDESYLSVGLPL.

Positions 16 to 44 (CSECRRRKIRCDRGFPCGPCRKSLPALSC) form a DNA-binding region, zn(2)-C6 fungal-type. 3 disordered regions span residues 54–73 (AASA…PKVN), 136–172 (DHEK…GVNP), and 620–642 (PHED…TGSR). Composition is skewed to polar residues over residues 153-168 (PGST…SHSA) and 627-642 (SIQS…TGSR).

The protein localises to the nucleus. Its function is as follows. Transcription factor that positively regulates the expression of the genes that mediate the biosynthesis of tenellin-type 2-pyridones, iron-chelating compounds involved in iron stress tolerance, competition with the natural competitor fungus Metarhizium robertsii and insect hosts infection. The sequence is that of Transcription factor tenR from Beauveria bassiana (strain ARSEF 2860) (White muscardine disease fungus).